Here is a 186-residue protein sequence, read N- to C-terminus: tRNA (cytidine(56)-2'-O)-methyltransferase (186 aa).

S-adenosyl-L-methionine is bound by residues leucine 84 and 110–114; that span reads GAEKV.

Belongs to the aTrm56 family. Homodimer.

The protein resides in the cytoplasm. It carries out the reaction cytidine(56) in tRNA + S-adenosyl-L-methionine = 2'-O-methylcytidine(56) in tRNA + S-adenosyl-L-homocysteine + H(+). Specifically catalyzes the AdoMet-dependent 2'-O-ribose methylation of cytidine at position 56 in tRNAs. The protein is tRNA (cytidine(56)-2'-O)-methyltransferase of Staphylothermus marinus (strain ATCC 43588 / DSM 3639 / JCM 9404 / F1).